A 346-amino-acid chain; its full sequence is Dimethyladenosine transferase 1, mitochondrial (346 aa).

The N-terminal 27 residues, 1–27 (MATQGVLAKYRLPPLPTIGEIIKLFNL), are a transit peptide targeting the mitochondrion. Positions 36, 38, 63, 85, 86, 111, 112, and 141 each coordinate S-adenosyl-L-methionine.

Belongs to the class I-like SAM-binding methyltransferase superfamily. rRNA adenine N(6)-methyltransferase family. KsgA subfamily.

Its subcellular location is the mitochondrion. It catalyses the reaction adenosine(N)/adenosine(N+1) in rRNA + 4 S-adenosyl-L-methionine = N(6)-dimethyladenosine(N)/N(6)-dimethyladenosine(N+1) in rRNA + 4 S-adenosyl-L-homocysteine + 4 H(+). Mitochondrial methyltransferase which uses S-adenosyl methionine to dimethylate two highly conserved adjacent adenosine residues (A1583 and A1584) within the loop of helix 45 at the 3-prime end of 12S rRNA, thereby regulating the assembly or stability of the small subunit of the mitochondrial ribosome. Also required for basal transcription of mitochondrial DNA, probably via its interaction with POLRMT and TFAM. Stimulates transcription independently of the methyltransferase activity. The protein is Dimethyladenosine transferase 1, mitochondrial (tfb1m) of Xenopus tropicalis (Western clawed frog).